A 213-amino-acid polypeptide reads, in one-letter code: Motile sperm domain-containing protein 1 (213 aa).

The 128-residue stretch at 16 to 143 (PVFVFPTELI…KEHLTESVFF (128 aa)) folds into the MSP domain. Transmembrane regions (helical) follow at residues 159 to 179 (SLLT…PTLG) and 191 to 211 (LSVN…MAIL). The Nuclear export signal signature appears at 205–208 (LITM).

Widely expressed. Shows highest expression in ribs, and slightly lower levels of expression in heart, kidney, muscle, thymus, calvariae and lung. Also detected at low levels in spleen and liver.

It is found in the endoplasmic reticulum membrane. It localises to the golgi apparatus membrane. Its function is as follows. Plays a role in differentiation and/or proliferation of mesenchymal stem cells. Proposed to be involved in epithelial-to-mesenchymal transition (EMT). However, another study suggests that it is not required for EMT or stem cell self-renewal and acts during later stages of differentiation. The polypeptide is Motile sperm domain-containing protein 1 (Mospd1) (Mus musculus (Mouse)).